We begin with the raw amino-acid sequence, 497 residues long: Tripartite motif-containing protein 5 (497 aa).

Alanine 2 carries the N-acetylalanine modification. An RING-type zinc finger spans residues 15-60 (CPICLELLTEPLSLPCGHSFCQACITANHRKSMLYKEGERSCPVCR). Serine 87 bears the Phosphoserine mark. Residues 92–133 (LKVDHCARHGEKLLLFCQEDSKVICWLCERSQEHRGHHTFLM) form a B box-type zinc finger. Zn(2+)-binding residues include cysteine 97, histidine 100, cysteine 119, and histidine 125. The stretch at 137-225 (AQEYHVKLQT…LTKSETEMVQ (89 aa)) forms a coiled coil. The tract at residues 187 to 200 (FEQLREILDWEESN) is required for interaction with GABARAP and for autophagy. Residues 283 to 497 (LKGMLDMFRE…VPMTLCSPSS (215 aa)) enclose the B30.2/SPRY domain.

Belongs to the TRIM/RBCC family. As to quaternary structure, can form homodimers and homotrimers. In addition to lower-order dimerization, also exhibits a higher-order multimerization and both low- and high-order multimerizations are essential for its restriction activity. Interacts with BTBD1 and BTBD2. Interacts with PSMC4, PSMC5, PSMD7 and HSPA8/HSC70. Interacts (via B30.2/SPRY domain) with HSPA1A/B. Interacts with PSMC2, MAP3K7/TAK1, TAB2 and TAB3. Interacts with SQSTM1. Interacts with TRIM6 and TRIM34. Interacts with ULK1 (phosphorylated form), GABARAP, GABARAPL1, GABARAPL2, MAP1LC3A, MAP1LC3C and BECN1. Degraded in a proteasome-independent fashion in the absence of viral infection but in a proteasome-dependent fashion following exposure to restriction sensitive virus. Post-translationally, autoubiquitinated in a RING finger- and UBE2D2-dependent manner. Monoubiquitinated by TRIM21. Deubiquitinated by Yersinia YopJ. Ubiquitination may not lead to proteasomal degradation.

Its subcellular location is the cytoplasm. The protein resides in the nucleus. It carries out the reaction S-ubiquitinyl-[E2 ubiquitin-conjugating enzyme]-L-cysteine + [acceptor protein]-L-lysine = [E2 ubiquitin-conjugating enzyme]-L-cysteine + N(6)-ubiquitinyl-[acceptor protein]-L-lysine.. It participates in protein modification; protein ubiquitination. Capsid-specific restriction factor that prevents infection from non-host-adapted retroviruses. Blocks viral replication early in the life cycle, after viral entry but before reverse transcription. In addition to acting as a capsid-specific restriction factor, also acts as a pattern recognition receptor that activates innate immune signaling in response to the retroviral capsid lattice. Binding to the viral capsid triggers its E3 ubiquitin ligase activity, and in concert with the heterodimeric ubiquitin conjugating enzyme complex UBE2V1-UBE2N (also known as UBC13-UEV1A complex) generates 'Lys-63'-linked polyubiquitin chains, which in turn are catalysts in the autophosphorylation of the MAP3K7/TAK1 complex (includes TAK1, TAB2, and TAB3). Activation of the MAP3K7/TAK1 complex by autophosphorylation results in the induction and expression of NF-kappa-B and MAPK-responsive inflammatory genes, thereby leading to an innate immune response in the infected cell. Plays a role in regulating autophagy through activation of autophagy regulator BECN1 by causing its dissociation from its inhibitors BCL2 and TAB2. The polypeptide is Tripartite motif-containing protein 5 (TRIM5) (Papio anubis (Olive baboon)).